A 394-amino-acid chain; its full sequence is Elongation factor Tu (394 aa).

A tr-type G domain is found at 10 to 204; it reads KEHANIGTIG…AVDTYIPTPE (195 aa). The G1 stretch occupies residues 19-26; the sequence is GHVDHGKT. 19-26 serves as a coordination point for GTP; sequence GHVDHGKT. Threonine 26 provides a ligand contact to Mg(2+). Positions 60–64 are G2; the sequence is GITIN. Residues 81-84 are G3; it reads DCPG. Residues 81 to 85 and 136 to 139 contribute to the GTP site; these read DCPGH and NKVD. The G4 stretch occupies residues 136-139; the sequence is NKVD. The segment at 174-176 is G5; it reads SAL.

The protein belongs to the TRAFAC class translation factor GTPase superfamily. Classic translation factor GTPase family. EF-Tu/EF-1A subfamily. As to quaternary structure, monomer.

Its subcellular location is the cytoplasm. The catalysed reaction is GTP + H2O = GDP + phosphate + H(+). Functionally, GTP hydrolase that promotes the GTP-dependent binding of aminoacyl-tRNA to the A-site of ribosomes during protein biosynthesis. The polypeptide is Elongation factor Tu (Staphylococcus aureus (strain COL)).